The sequence spans 314 residues: MSTEVVEEFDADYTGRHFLSVEDMSSDDVMRIIERGRQFKAGDAPRVEPGHVAINMFFENSTRTMTSFQMAEHRLGMKILDFDPGHSSVTKGESLYDSVRTVDAIGAEVAVIRHSTNHYYDYLLATGMLGLSVVNGGDGSGQHPSQCMLDLMTIAEEFGHVDGLTVAISGDIVHSRVARSDAQILTRLGANVVFTGPREWMDHDVTRLGTMATLDEVIADVDVAMMLRVQHERFDAGPDFSATDYLHTFGLTDERAERMKPHAIIMHPAPVNRGCEISGHLVEAPSSRIFEQMGNGVMVRMAILEQVLHGRETK.

Carbamoyl phosphate contacts are provided by R63 and T64. Position 91 (K91) interacts with L-aspartate. The carbamoyl phosphate site is built by R113, H143, and Q146. Positions 176 and 228 each coordinate L-aspartate. Positions 269 and 270 each coordinate carbamoyl phosphate.

The protein belongs to the aspartate/ornithine carbamoyltransferase superfamily. ATCase family. As to quaternary structure, heterododecamer (2C3:3R2) of six catalytic PyrB chains organized as two trimers (C3), and six regulatory PyrI chains organized as three dimers (R2).

It catalyses the reaction carbamoyl phosphate + L-aspartate = N-carbamoyl-L-aspartate + phosphate + H(+). The protein operates within pyrimidine metabolism; UMP biosynthesis via de novo pathway; (S)-dihydroorotate from bicarbonate: step 2/3. In terms of biological role, catalyzes the condensation of carbamoyl phosphate and aspartate to form carbamoyl aspartate and inorganic phosphate, the committed step in the de novo pyrimidine nucleotide biosynthesis pathway. The protein is Aspartate carbamoyltransferase catalytic subunit of Cutibacterium acnes (strain DSM 16379 / KPA171202) (Propionibacterium acnes).